A 325-amino-acid polypeptide reads, in one-letter code: Structure-specific endonuclease subunit SLX1 (325 aa).

The GIY-YIG domain occupies 10-92 (ALYTVYILRS…NNPHLSMHIP (83 aa)). The segment at 230–284 (CVVCREEMKSGEGLHAVCTHEGCDGVGHISCWSRSFLKNNDTGSILPVQGQCPMC) adopts an SLX1-type zinc-finger fold.

It belongs to the SLX1 family. Forms a heterodimer with SLX4. It depends on a divalent metal cation as a cofactor.

Its subcellular location is the nucleus. Functionally, catalytic subunit of the SLX1-SLX4 structure-specific endonuclease that resolves DNA secondary structures generated during DNA repair and recombination. Has endonuclease activity towards branched DNA substrates, introducing single-strand cuts in duplex DNA close to junctions with ss-DNA. This is Structure-specific endonuclease subunit SLX1 from Chaetomium globosum (strain ATCC 6205 / CBS 148.51 / DSM 1962 / NBRC 6347 / NRRL 1970) (Soil fungus).